The primary structure comprises 165 residues: Phosphopantetheine adenylyltransferase (165 aa).

A substrate-binding site is contributed by T11. Residues 11-12 (TF) and H19 each bind ATP. Substrate is bound by residues K43, V75, and R89. ATP is bound by residues 90–92 (GLR), E100, and 125–131 (YQFISST).

It belongs to the bacterial CoaD family. In terms of assembly, homohexamer. Requires Mg(2+) as cofactor.

The protein resides in the cytoplasm. It catalyses the reaction (R)-4'-phosphopantetheine + ATP + H(+) = 3'-dephospho-CoA + diphosphate. It participates in cofactor biosynthesis; coenzyme A biosynthesis; CoA from (R)-pantothenate: step 4/5. Reversibly transfers an adenylyl group from ATP to 4'-phosphopantetheine, yielding dephospho-CoA (dPCoA) and pyrophosphate. This Acidovorax ebreus (strain TPSY) (Diaphorobacter sp. (strain TPSY)) protein is Phosphopantetheine adenylyltransferase.